A 205-amino-acid polypeptide reads, in one-letter code: Holliday junction branch migration complex subunit RuvA (205 aa).

A domain I region spans residues 1-64 (MIGKLKGILE…EEAIRLFGFV (64 aa)). The interval 65 to 143 (AKAEQEWFCL…PFNDNALHFT (79 aa)) is domain II. The segment at 144 to 149 (PQPHLE) is flexible linker. Residues 150 to 205 (VTHQPTNDALSALVKLGFERDQAARALALAMNALEGETVSSALLIRHSLKLLSPST) are domain III.

The protein belongs to the RuvA family. In terms of assembly, homotetramer. Forms an RuvA(8)-RuvB(12)-Holliday junction (HJ) complex. HJ DNA is sandwiched between 2 RuvA tetramers; dsDNA enters through RuvA and exits via RuvB. An RuvB hexamer assembles on each DNA strand where it exits the tetramer. Each RuvB hexamer is contacted by two RuvA subunits (via domain III) on 2 adjacent RuvB subunits; this complex drives branch migration. In the full resolvosome a probable DNA-RuvA(4)-RuvB(12)-RuvC(2) complex forms which resolves the HJ.

It is found in the cytoplasm. The RuvA-RuvB-RuvC complex processes Holliday junction (HJ) DNA during genetic recombination and DNA repair, while the RuvA-RuvB complex plays an important role in the rescue of blocked DNA replication forks via replication fork reversal (RFR). RuvA specifically binds to HJ cruciform DNA, conferring on it an open structure. The RuvB hexamer acts as an ATP-dependent pump, pulling dsDNA into and through the RuvAB complex. HJ branch migration allows RuvC to scan DNA until it finds its consensus sequence, where it cleaves and resolves the cruciform DNA. The sequence is that of Holliday junction branch migration complex subunit RuvA from Bartonella quintana (strain Toulouse) (Rochalimaea quintana).